A 44-amino-acid polypeptide reads, in one-letter code: MFYGSFNKCVTGYSCRMAIHYYVYRIIKSATRPDYKSNTQILVL.

This is an uncharacterized protein from Saccharomyces cerevisiae (strain ATCC 204508 / S288c) (Baker's yeast).